Consider the following 243-residue polypeptide: ATP synthase subunit a, chloroplastic (243 aa).

Helical transmembrane passes span 32–52 (GQVL…SFVG), 96–116 (TVFL…WALI), 129–149 (DINT…YAGI), 195–215 (LVVG…IMLL), and 216–236 (GCFT…AYIG).

The protein belongs to the ATPase A chain family. In terms of assembly, F-type ATPases have 2 components, CF(1) - the catalytic core - and CF(0) - the membrane proton channel. CF(1) has five subunits: alpha(3), beta(3), gamma(1), delta(1), epsilon(1). CF(0) has four main subunits: a, b, b' and c.

It is found in the plastid. Its subcellular location is the chloroplast thylakoid membrane. Its function is as follows. Key component of the proton channel; it plays a direct role in the translocation of protons across the membrane. This chain is ATP synthase subunit a, chloroplastic, found in Tetradesmus obliquus (Green alga).